A 256-amino-acid polypeptide reads, in one-letter code: Calsenilin (256 aa).

The disordered stretch occupies residues M1–G20. S14 is subject to Phosphoserine. K26 participates in a covalent cross-link: Glycyl lysine isopeptide (Lys-Gly) (interchain with G-Cter in SUMO1). S-palmitoyl cysteine attachment occurs at residues C45 and C46. S60 carries the phosphoserine modification. S63 bears the Phosphoserine; by CK1 mark. Residues L67–P123 form the EF-hand 1; degenerate domain. K90 participates in a covalent cross-link: Glycyl lysine isopeptide (Lys-Gly) (interchain with G-Cter in SUMO1). EF-hand domains follow at residues D126–G161, T162–M197, and A210–I245. Ca(2+) contacts are provided by D175, N177, D179, Y181, E186, D223, N225, D227, and E234. The tract at residues E243–I256 is interaction with KCND2.

It belongs to the recoverin family. In terms of assembly, binds to DNA as a homomultimer. Dimerization is induced by binding to calcium. Interacts with the C-terminus of PSEN1 and PSEN2 and with PSEN2 CTF subunit. Associates with KCN1. Component of heteromultimeric potassium channels. Identified in potassium channel complexes containing KCND1, KCND2, KCND3, KCNIP1, KCNIP2, KCNIP3, KCNIP4, DPP6 and DPP10. Interacts with KCND2 and KCND3. In terms of processing, palmitoylated. Palmitoylation enhances association with the plasma membrane. Post-translationally, proteolytically cleaved by caspase-3. Phosphorylation at Ser-63 inhibits cleavage by CASP3. Highly expressed in brain. Widely expressed at lower levels. Expression levels are elevated in brain cortex regions affected by Alzheimer disease.

It localises to the cytoplasm. Its subcellular location is the cell membrane. The protein resides in the endoplasmic reticulum. The protein localises to the golgi apparatus. It is found in the nucleus. Its function is as follows. Calcium-dependent transcriptional repressor that binds to the DRE element of genes including PDYN and FOS. Affinity for DNA is reduced upon binding to calcium and enhanced by binding to magnesium. Seems to be involved in nociception. Regulatory subunit of Kv4/D (Shal)-type voltage-gated rapidly inactivating A-type potassium channels, such as KCND2/Kv4.2 and KCND3/Kv4.3. Modulates channel expression at the cell membrane, gating characteristics, inactivation kinetics and rate of recovery from inactivation in a calcium-dependent and isoform-specific manner. In terms of biological role, may play a role in the regulation of PSEN2 proteolytic processing and apoptosis. Together with PSEN2 involved in modulation of amyloid-beta formation. The polypeptide is Calsenilin (KCNIP3) (Homo sapiens (Human)).